A 384-amino-acid chain; its full sequence is Ceramide synthase 6 (384 aa).

Over 1–34 (MAGILAWFWNERFWLPHNVTWADLKNTEEATFPQ) the chain is Lumenal. N-linked (GlcNAc...) asparagine glycosylation occurs at N18. The helical transmembrane segment at 35–55 (AEDLYLAFPLAFCIFMVRLIF) threads the bilayer. The interval 66 to 127 (ALNIQANGPQ…RQRRNQEKPS (62 aa)) is homeobox-like. Positions 130–331 (TRFCESMWRF…IVKIACKTVS (202 aa)) constitute a TLC domain. Transmembrane regions (helical) follow at residues 174–194 (LTAD…SLMV), 205–225 (FGIM…SYVN), 263–283 (LFVM…PLWV), and 303–323 (VFNL…YLIV). The Cytoplasmic portion of the chain corresponds to 324-384 (KIACKTVSKG…LLTGPCSVDD (61 aa)). The segment at 335–384 (VSKDDRSDIESSSDDEDSEPPGKKPHSSTTTNGTSGTNGYLLTGPCSVDD) is disordered. Positions 361-373 (SSTTTNGTSGTNG) are enriched in low complexity.

In terms of processing, N-glycosylated. Glycosylation on Asn-18 is not necessary for function. Post-translationally, acetylated. Deacetylation by SIRT3 increases enzyme activity and promotes mitochondrial ceramide accumulation. Phosphorylated at the C-terminus by CK2. In terms of tissue distribution, broadly expressed, with highest levels in kidney and brain (at protein level).

The protein resides in the endoplasmic reticulum membrane. It carries out the reaction a sphingoid base + hexadecanoyl-CoA = an N-hexadecanoyl-sphingoid base + CoA + H(+). The catalysed reaction is sphinganine + hexadecanoyl-CoA = N-hexadecanoylsphinganine + CoA + H(+). The enzyme catalyses hexadecasphinganine + hexadecanoyl-CoA = N-hexadecanoylhexadecasphinganine + CoA + H(+). It catalyses the reaction sphing-4-enine + hexadecanoyl-CoA = N-hexadecanoylsphing-4-enine + CoA + H(+). It carries out the reaction sphinganine + tetradecanoyl-CoA = N-(tetradecanoyl)-sphinganine + CoA + H(+). The catalysed reaction is sphinganine + octadecanoyl-CoA = N-(octadecanoyl)-sphinganine + CoA + H(+). The protein operates within lipid metabolism; sphingolipid metabolism. Its function is as follows. Ceramide synthase that catalyzes the transfer of the acyl chain from acyl-CoA to a sphingoid base, with high selectivity toward palmitoyl-CoA (hexadecanoyl-CoA; C16:0-CoA). Can use other acyl donors, but with less efficiency. N-acylates sphinganine and sphingosine bases to form dihydroceramides and ceramides in de novo synthesis and salvage pathways, respectively. Ceramides generated by CERS6 play a role in inflammatory response. Acts as a regulator of metabolism and hepatic lipid accumulation. Under high fat diet, palmitoyl- (C16:0-) ceramides generated by CERS6 specifically bind the mitochondrial fission factor MFF, thereby promoting mitochondrial fragmentation and contributing to the development of obesity. This chain is Ceramide synthase 6, found in Mus musculus (Mouse).